We begin with the raw amino-acid sequence, 101 residues long: Large ribosomal subunit protein uL24 (101 aa).

This sequence belongs to the universal ribosomal protein uL24 family. As to quaternary structure, part of the 50S ribosomal subunit.

Its function is as follows. One of two assembly initiator proteins, it binds directly to the 5'-end of the 23S rRNA, where it nucleates assembly of the 50S subunit. Functionally, one of the proteins that surrounds the polypeptide exit tunnel on the outside of the subunit. The chain is Large ribosomal subunit protein uL24 from Streptococcus gordonii (strain Challis / ATCC 35105 / BCRC 15272 / CH1 / DL1 / V288).